An 84-amino-acid polypeptide reads, in one-letter code: Acetylcholine receptor subunit alpha (84 aa).

Cystine bridges form between Cys7-Cys21 and Cys71-Cys72. Residue Asn20 is glycosylated (N-linked (GlcNAc...) asparagine).

It belongs to the ligand-gated ion channel (TC 1.A.9) family. Acetylcholine receptor (TC 1.A.9.1) subfamily. Alpha-1/CHRNA1 sub-subfamily. In terms of assembly, one of the alpha chains that assemble within the acetylcholine receptor, a pentamer of two alpha chains, a beta, a delta, and a gamma (in immature muscle) or epsilon (in mature muscle) chains. The muscle heteropentamer composed of alpha-1, beta-1, delta, epsilon subunits interacts with the alpha-conotoxin ImII.

It is found in the postsynaptic cell membrane. It localises to the cell membrane. It catalyses the reaction K(+)(in) = K(+)(out). It carries out the reaction Na(+)(in) = Na(+)(out). Functionally, upon acetylcholine binding, the AChR responds by an extensive change in conformation that affects all subunits and leads to opening of an ion-conducting channel across the plasma membrane. The protein is Acetylcholine receptor subunit alpha (CHRNA1) of Crocidura russula (Greater white-toothed shrew).